Reading from the N-terminus, the 92-residue chain is Small ribosomal subunit protein uS19 (92 aa).

Belongs to the universal ribosomal protein uS19 family.

Protein S19 forms a complex with S13 that binds strongly to the 16S ribosomal RNA. The protein is Small ribosomal subunit protein uS19 of Lactococcus lactis subsp. lactis (strain IL1403) (Streptococcus lactis).